The chain runs to 636 residues: DNA mismatch repair protein MutL (636 aa).

Residues Arg362–Glu393 are disordered. The segment covering Lys363–Glu393 has biased composition (basic and acidic residues).

It belongs to the DNA mismatch repair MutL/HexB family.

This protein is involved in the repair of mismatches in DNA. It is required for dam-dependent methyl-directed DNA mismatch repair. May act as a 'molecular matchmaker', a protein that promotes the formation of a stable complex between two or more DNA-binding proteins in an ATP-dependent manner without itself being part of a final effector complex. This chain is DNA mismatch repair protein MutL, found in Lactobacillus helveticus (strain DPC 4571).